The chain runs to 673 residues: Gametogenetin (673 aa).

The interval 1-599 is disordered; that stretch reads MGNVQSEPSA…TSTAGASNKG (599 aa). The span at 14 to 30 shows a compositional bias: basic and acidic residues; the sequence is SRKEQASDRASDSRRTP. Residues 70–83 are compositionally biased toward low complexity; sequence ASSSPLPLTLELPS. The interaction with GGNBP1 stretch occupies residues 125 to 506; that stretch reads RGLLEASHRG…APTPPSTLSP (382 aa). Residues 161–178 are compositionally biased toward pro residues; sequence PAPPPTPLEPRKQLPPAP. Polar residues predominate over residues 192-202; sequence LASSATSPTES. Over residues 257 to 268 the composition is skewed to low complexity; that stretch reads SASGPLAAKASP. Ser-399 carries the post-translational modification Phosphoserine. The segment covering 413-424 has biased composition (low complexity); the sequence is PRRPTPALLAPP. The segment covering 438–475 has biased composition (pro residues); it reads RPVPPSPQQIPPLPPPPPTPPATPPPAPPPTPQPPALP. The segment covering 504 to 531 has biased composition (low complexity); that stretch reads LSPTAAADQVPAATPATVTSQVPATATA. Residues 511-673 are interactions with ZNF403/GGNBP2 and OAZ3; sequence DQVPAATPAT…HYDLQATHST (163 aa). Basic residues predominate over residues 542–551; it reads TRTRRNKGPR.

As to quaternary structure, isoform 1 and isoform 3 interact with FANCL. Isoform 1 interacts with GGNBP1, ZNF403/GGNBP2 and OAZ3. Isoform 2 interacts with GGNBP1. As to expression, testis-specific. Specifically expressed in the germ cells and not in the somatic, Sertoli, or Leydig cells. In adult testis, expression starts in stage VIII pachytene spermatocytes, increases in stage IX and X pachytene spermatocytes, and culminates in stage XI diplotene spermatocytes and the meiotic cells in stage XII. Expression decreases slightly in step 1-3 spermatids, further decreases in step 4-11 spermatids, and is no longer detectable in step 12 spermatids and beyond. Isoform 2 is mainly expressed in testis.

Its subcellular location is the cytoplasm. It localises to the perinuclear region. It is found in the cytoplasmic vesicle. The protein localises to the nucleus. The protein resides in the nucleolus. In terms of biological role, may be involved in spermatogenesis. The sequence is that of Gametogenetin (Ggn) from Mus musculus (Mouse).